We begin with the raw amino-acid sequence, 385 residues long: ATP phosphoribosyltransferase regulatory subunit (385 aa).

It belongs to the class-II aminoacyl-tRNA synthetase family. HisZ subfamily. As to quaternary structure, heteromultimer composed of HisG and HisZ subunits.

The protein resides in the cytoplasm. The protein operates within amino-acid biosynthesis; L-histidine biosynthesis; L-histidine from 5-phospho-alpha-D-ribose 1-diphosphate: step 1/9. Required for the first step of histidine biosynthesis. May allow the feedback regulation of ATP phosphoribosyltransferase activity by histidine. The sequence is that of ATP phosphoribosyltransferase regulatory subunit from Bordetella petrii (strain ATCC BAA-461 / DSM 12804 / CCUG 43448).